Consider the following 295-residue polypeptide: Very long chain fatty acid elongase 5 (295 aa).

7 helical membrane passes run 26–46 (WLLL…LFIV), 64–84 (ILVV…YELV), 112–132 (VLWW…FFIL), 150–170 (MLNI…FFGA), 172–192 (LNSF…IPAI), 207–223 (LTQF…AMIW), and 227–247 (FPMG…ILFT). The segment at 265-295 (YQNGSASAVNGYTNSFSSLEDNVKQRKQRQN) is disordered. A compositionally biased stretch (polar residues) spans 266 to 284 (QNGSASAVNGYTNSFSSLE).

This sequence belongs to the ELO family. ELOVL5 subfamily.

The protein localises to the endoplasmic reticulum membrane. Its subcellular location is the cell projection. It localises to the dendrite. It carries out the reaction a very-long-chain acyl-CoA + malonyl-CoA + H(+) = a very-long-chain 3-oxoacyl-CoA + CO2 + CoA. The enzyme catalyses (6Z,9Z,12Z)-octadecatrienoyl-CoA + malonyl-CoA + H(+) = (8Z,11Z,14Z)-3-oxoeicosatrienoyl-CoA + CO2 + CoA. It catalyses the reaction (9Z,12Z,15Z)-octadecatrienoyl-CoA + malonyl-CoA + H(+) = (11Z,14Z,17Z)-3-oxoeicosatrienoyl-CoA + CO2 + CoA. The catalysed reaction is (9Z)-hexadecenoyl-CoA + malonyl-CoA + H(+) = 3-oxo-(11Z)-octadecenoyl-CoA + CO2 + CoA. It carries out the reaction (9Z)-octadecenoyl-CoA + malonyl-CoA + H(+) = 3-oxo-(11Z)-eicosenoyl-CoA + CO2 + CoA. The enzyme catalyses (11Z)-octadecenoyl-CoA + malonyl-CoA + H(+) = 3-oxo-(13Z)-eicosenoyl-CoA + CO2 + CoA. It catalyses the reaction (9Z,12Z)-octadecadienoyl-CoA + malonyl-CoA + H(+) = (11Z,14Z)-3-oxoicosa-11,14-dienoyl-CoA + CO2 + CoA. The catalysed reaction is (6Z,9Z,12Z,15Z)-octadecatetraenoyl-CoA + malonyl-CoA + H(+) = (8Z,11Z,14Z,17Z)-3-oxoicosatetraenoyl-CoA + CO2 + CoA. It carries out the reaction (5Z,8Z,11Z,14Z)-eicosatetraenoyl-CoA + malonyl-CoA + H(+) = (7Z,10Z,13Z,16Z)-3-oxodocosatetraenoyl-CoA + CO2 + CoA. The enzyme catalyses (5Z,8Z,11Z,14Z,17Z)-eicosapentaenoyl-CoA + malonyl-CoA + H(+) = 3-oxo-(7Z,10Z,13Z,16Z,19Z)-docosapentaenoyl-CoA + CO2 + CoA. The protein operates within lipid metabolism; polyunsaturated fatty acid biosynthesis. Its function is as follows. Catalyzes the first and rate-limiting reaction of the four reactions that constitute the long-chain fatty acids elongation cycle. This endoplasmic reticulum-bound enzymatic process allows the addition of 2 carbons to the chain of long- and very long-chain fatty acids (VLCFAs) per cycle. Condensing enzyme that acts specifically toward polyunsaturated acyl-CoA with the higher activity toward C18:3(n-6) acyl-CoA. May participate in the production of monounsaturated and of polyunsaturated VLCFAs of different chain lengths that are involved in multiple biological processes as precursors of membrane lipids and lipid mediators. In conditions where the essential linoleic and alpha linoleic fatty acids are lacking it is also involved in the synthesis of Mead acid from oleic acid. In Xenopus laevis (African clawed frog), this protein is Very long chain fatty acid elongase 5.